We begin with the raw amino-acid sequence, 297 residues long: tRNA pseudouridine synthase A (297 aa).

The active-site Nucleophile is the Asp-57. Tyr-115 contributes to the substrate binding site.

It belongs to the tRNA pseudouridine synthase TruA family. In terms of assembly, homodimer.

It catalyses the reaction uridine(38/39/40) in tRNA = pseudouridine(38/39/40) in tRNA. Formation of pseudouridine at positions 38, 39 and 40 in the anticodon stem and loop of transfer RNAs. The polypeptide is tRNA pseudouridine synthase A (Nitratidesulfovibrio vulgaris (strain ATCC 29579 / DSM 644 / CCUG 34227 / NCIMB 8303 / VKM B-1760 / Hildenborough) (Desulfovibrio vulgaris)).